The following is a 1218-amino-acid chain: Protein dispatched (1218 aa).

Residues 21 to 41 (YLVVVSIAVYCVACIIVALVL) traverse the membrane as a helical segment. A disordered region spans residues 99–135 (VETKLHPNHRRRKNKHKNRNKNKRRKEQNQSSHEHHD). Positions 104 to 124 (HPNHRRRKNKHKNRNKNKRRK) are enriched in basic residues. N-linked (GlcNAc...) asparagine glycosylation is found at asparagine 127, asparagine 176, asparagine 197, asparagine 264, asparagine 319, and asparagine 388. In terms of domain architecture, SSD spans 430 to 624 (AMDLGLENEL…ITWLPASVSI (195 aa)). Helical transmembrane passes span 443–463 (LLLT…ASVW), 473–493 (LMSC…YAIV), 504–524 (LLAV…FLKI), 570–590 (AAAS…ASYS), 598–618 (CFGI…ITWL), and 670–690 (AYLW…IVFW). Residues asparagine 767, asparagine 883, and asparagine 891 are each glycosylated (N-linked (GlcNAc...) asparagine). 5 helical membrane passes run 975–995 (LAVL…VLTV), 996–1016 (SLSI…LNIL), 1019–1039 (IAVS…GIHY), 1058–1078 (IIGP…IMMA), and 1087–1107 (IGVF…FFLM).

Belongs to the dispatched family.

Its subcellular location is the membrane. Segment polarity protein which functions in hedgehog (Hh) signaling. Regulates the trafficking and the release of cholesterol-modified hedgehog protein from cells of the posterior compartment (P cells) and is hence required for the effective production of the Hh signal. This chain is Protein dispatched (disp), found in Drosophila melanogaster (Fruit fly).